A 166-amino-acid polypeptide reads, in one-letter code: NADH-quinone oxidoreductase subunit E (166 aa).

4 residues coordinate [2Fe-2S] cluster: Cys-92, Cys-97, Cys-133, and Cys-137.

This sequence belongs to the complex I 24 kDa subunit family. As to quaternary structure, composed of 13 different subunits. Subunits NuoCD, E, F, and G constitute the peripheral sector of the complex. It depends on [2Fe-2S] cluster as a cofactor.

It catalyses the reaction a quinone + NADH + 5 H(+)(in) = a quinol + NAD(+) + 4 H(+)(out). NDH-1 shuttles electrons from NADH, via FMN and iron-sulfur (Fe-S) centers, to quinones in the respiratory chain. The immediate electron acceptor for the enzyme in this species is believed to be ubiquinone. Couples the redox reaction to proton translocation (for every two electrons transferred, four hydrogen ions are translocated across the cytoplasmic membrane), and thus conserves the redox energy in a proton gradient. The sequence is that of NADH-quinone oxidoreductase subunit E (nuoE) from Shigella flexneri.